Consider the following 158-residue polypeptide: Ribosome maturation factor RimP (158 aa).

This sequence belongs to the RimP family.

The protein localises to the cytoplasm. Its function is as follows. Required for maturation of 30S ribosomal subunits. The sequence is that of Ribosome maturation factor RimP from Lactobacillus helveticus (strain DPC 4571).